The primary structure comprises 403 residues: TPR repeat-containing protein Synpcc7942_0270 (403 aa).

5 TPR repeats span residues 208–243 (AYLC…PEPA), 244–282 (VRYE…AIHK), 283–316 (LGAW…APQA), 317–350 (TVAL…DPND), and 351–387 (PSLY…QGSP).

The polypeptide is TPR repeat-containing protein Synpcc7942_0270 (Synechococcus elongatus (strain ATCC 33912 / PCC 7942 / FACHB-805) (Anacystis nidulans R2)).